We begin with the raw amino-acid sequence, 452 residues long: Transcription factor ETV6 (452 aa).

The span at Met-1–Ile-10 shows a compositional bias: polar residues. The tract at residues Met-1–Ser-30 is disordered. Residue Lys-11 is modified to N6-acetyllysine; alternate. Residue Lys-11 forms a Glycyl lysine isopeptide (Lys-Gly) (interchain with G-Cter in SUMO2); alternate linkage. Thr-18 carries the post-translational modification Phosphothreonine. Phosphoserine is present on Ser-22. One can recognise a PNT domain in the interval Ala-40 to Arg-124. Positions Val-158–Ser-262 are disordered. Phosphoserine is present on residues Ser-213 and Ser-238. Residues Gln-230–Glu-250 show a composition bias toward polar residues. Ser-257 carries the phosphoserine; by MAPK14 modification. Residue Lys-288 forms a Glycyl lysine isopeptide (Lys-Gly) (interchain with G-Cter in SUMO2) linkage. Position 302 is an N6-acetyllysine; alternate (Lys-302). Residue Lys-302 forms a Glycyl lysine isopeptide (Lys-Gly) (interchain with G-Cter in SUMO2); alternate linkage. Residue Ser-323 is modified to Phosphoserine. Residues Arg-339 to Met-420 constitute a DNA-binding region (ETS). Residues Lys-403 and Lys-421 each participate in a glycyl lysine isopeptide (Lys-Gly) (interchain with G-Cter in SUMO2) cross-link.

Belongs to the ETS family. Can form homodimers or heterodimers with TEL2 or FLI1. Interacts with L3MBTL1 and HDAC9. In terms of processing, phosphorylation of Ser-257 by MAPK14 (p38) inhibits ETV6 transcriptional repression. As to expression, ubiquitous.

The protein resides in the nucleus. Functionally, transcriptional repressor; binds to the DNA sequence 5'-CCGGAAGT-3'. Plays a role in hematopoiesis and malignant transformation. The sequence is that of Transcription factor ETV6 (ETV6) from Homo sapiens (Human).